Here is a 492-residue protein sequence, read N- to C-terminus: MAEDSESAASQQSLELDDQDTCGIDGDNEEENEHMQGSPGGDLGAKKKKKKQKRKKEKPSSGGTKSDSASDSQEIKNPAIPMQKLQDIQRAMELLSTCQGPAKNIDEATKHKYQFWDTQPVPKLNEVVTTHGPIEPDKENIRQEPYSLPQGFMWDTLDLSNAEVLKELYTLLNENYVEDDDNMFRFDYSPNFLKWALRPPGWLPHWHCGVRVSSNKKLVGFISAIPADIHIYDTLKRMVEINFLCVHKKLRSKRVAPVLIREITRRVNLEGIFQAVYTAGVVLPKPVSTCRYWHRSLNPRKLVEVKFSHLSRNMTLQRTMKLYRLPDSTRTPGLRTMGDRDVKQVTALLQKHLSQFHLRPVMGEEEVKHWFLPQENIIDTFVVEGSGGMLTDFISFYTLPSTVMHHPLHKSLKAAYSFYNVHTETPLIDLMNDALILAKLKGFDVFNALDLMDNKNFLEKLKFGIGDGNLQYYLYNWKCPPMDPEKVGLVLQ.

Positions 1 to 77 are disordered; it reads MAEDSESAAS…SASDSQEIKN (77 aa). Residues 15 to 32 are compositionally biased toward acidic residues; sequence ELDDQDTCGIDGDNEEEN. A compositionally biased stretch (basic residues) spans 46–57; it reads KKKKKKQKRKKE. A compositionally biased stretch (polar residues) spans 61–72; the sequence is SGGTKSDSASDS. Residues His-111, Trp-116, Leu-244, Val-246, Ser-252, Arg-254, Val-255, and Ala-256 each coordinate tetradecanoyl-CoA.

The protein belongs to the NMT family.

Its subcellular location is the cytoplasm. It is found in the membrane. The enzyme catalyses N-terminal glycyl-[protein] + tetradecanoyl-CoA = N-tetradecanoylglycyl-[protein] + CoA + H(+). It catalyses the reaction N-terminal glycyl-L-lysyl-[protein] + tetradecanoyl-CoA = N-terminal glycyl-(N(6)-tetradecanoyl)-L-lysyl-[protein] + CoA + H(+). Adds a myristoyl group to the N-terminal glycine residue of certain cellular and viral proteins. Also able to mediate N-terminal lysine myristoylation of proteins. This chain is Glycylpeptide N-tetradecanoyltransferase 2, found in Danio rerio (Zebrafish).